The primary structure comprises 405 residues: MSISKYSIRFLSDKATRFVPKSGVYPKGYAVGGIHCGVKKDGKSLDLAILQNTFNKEASTAGVFTQNKFKAAPVQVSMRILKQKSGSGINSFVINSGNANAVTGSKGMKDAEEMVTVTDSVLENPKDSTLVMSTGVIGNNLPIDNILTGIPKLSLNHLGNTHQHWIDCATAICTTDTFPKLVTKQFNLGNDTYTLAGLCKGAGMICPNMATLLGFFVTDAPVSPNALQQILRYAVDRSFNSITVDGDMSTNDTIVAMANGAAGGELIDNTSSSAERFSALQTEIVDFAQQLAQLVVRDGEGATKFITLKVNDALSYKDAKSIASSIANSSLFKTAMYGKDANWGRILCAIGYADVSTDQSVIPNKTSVKFVPVDGSEPIKIIWLMVNSKKLTKIELQKYYKMKIW.

4 residues coordinate substrate: Thr-174, Lys-200, Thr-211, and Glu-300. Thr-211 functions as the Nucleophile in the catalytic mechanism.

This sequence belongs to the ArgJ family. As to quaternary structure, heterodimer of an alpha and a beta chain. Post-translationally, the alpha and beta chains are autoproteolytically processed from a single precursor protein within the mitochondrion.

It localises to the mitochondrion matrix. The enzyme catalyses N(2)-acetyl-L-ornithine + L-glutamate = N-acetyl-L-glutamate + L-ornithine. It carries out the reaction L-glutamate + acetyl-CoA = N-acetyl-L-glutamate + CoA + H(+). Its pathway is amino-acid biosynthesis; L-arginine biosynthesis; L-ornithine and N-acetyl-L-glutamate from L-glutamate and N(2)-acetyl-L-ornithine (cyclic): step 1/1. It functions in the pathway amino-acid biosynthesis; L-arginine biosynthesis; N(2)-acetyl-L-ornithine from L-glutamate: step 1/4. Functionally, catalyzes two activities which are involved in the cyclic version of arginine biosynthesis: the synthesis of acetylglutamate from glutamate and acetyl-CoA, and of ornithine by transacetylation between acetylornithine and glutamate. This Candida tropicalis (strain ATCC MYA-3404 / T1) (Yeast) protein is Arginine biosynthesis bifunctional protein ArgJ, mitochondrial.